The primary structure comprises 434 residues: Tol-Pal system protein TolB (434 aa).

The signal sequence occupies residues 1-21 (MIVRRALALAALALAASPALA). The segment at 411–434 (GDRQTPVTSGKTDLAAPAWGPLAP) is disordered.

The protein belongs to the TolB family. The Tol-Pal system is composed of five core proteins: the inner membrane proteins TolA, TolQ and TolR, the periplasmic protein TolB and the outer membrane protein Pal. They form a network linking the inner and outer membranes and the peptidoglycan layer.

It is found in the periplasm. In terms of biological role, part of the Tol-Pal system, which plays a role in outer membrane invagination during cell division and is important for maintaining outer membrane integrity. This Anaeromyxobacter sp. (strain K) protein is Tol-Pal system protein TolB.